Here is a 743-residue protein sequence, read N- to C-terminus: Phosphoribosylformylglycinamidine synthase subunit PurL (743 aa).

The active site involves H50. Y53 and K92 together coordinate ATP. E94 is a binding site for Mg(2+). Residues 95–98 (SHNH) and R117 each bind substrate. H96 serves as the catalytic Proton acceptor. Mg(2+) is bound at residue D118. Residue Q241 participates in substrate binding. Mg(2+) is bound at residue D269. Residue 313-315 (ESQ) participates in substrate binding. ATP contacts are provided by D494 and G531. Residue N532 participates in Mg(2+) binding. Residue S534 coordinates substrate.

Belongs to the FGAMS family. In terms of assembly, monomer. Part of the FGAM synthase complex composed of 1 PurL, 1 PurQ and 2 PurS subunits.

It localises to the cytoplasm. The enzyme catalyses N(2)-formyl-N(1)-(5-phospho-beta-D-ribosyl)glycinamide + L-glutamine + ATP + H2O = 2-formamido-N(1)-(5-O-phospho-beta-D-ribosyl)acetamidine + L-glutamate + ADP + phosphate + H(+). It functions in the pathway purine metabolism; IMP biosynthesis via de novo pathway; 5-amino-1-(5-phospho-D-ribosyl)imidazole from N(2)-formyl-N(1)-(5-phospho-D-ribosyl)glycinamide: step 1/2. In terms of biological role, part of the phosphoribosylformylglycinamidine synthase complex involved in the purines biosynthetic pathway. Catalyzes the ATP-dependent conversion of formylglycinamide ribonucleotide (FGAR) and glutamine to yield formylglycinamidine ribonucleotide (FGAM) and glutamate. The FGAM synthase complex is composed of three subunits. PurQ produces an ammonia molecule by converting glutamine to glutamate. PurL transfers the ammonia molecule to FGAR to form FGAM in an ATP-dependent manner. PurS interacts with PurQ and PurL and is thought to assist in the transfer of the ammonia molecule from PurQ to PurL. This is Phosphoribosylformylglycinamidine synthase subunit PurL from Rhizobium meliloti (strain 1021) (Ensifer meliloti).